The chain runs to 329 residues: MPTIDEIAKLCNVSKTTVSRVLNNHPYVSKEKRDMILKAINELDYTPNYLARNFRRNKTQTIALSVPSIDHPFFAQLIKGVSHEVLFKNYKVIVFQTFYDKQTELELLELLKHKEVDGIILGTLENEWDQISPFLKYGPILLCNEYHHSADITIIGYDEFEAAYMGVVHLIERGHKKIGFCFDTPYSEAQCQRKEGYLKALQDYNLHHRSEWIFGEMFNIEDGFRVFHKIKDLKDRPSAIFTGNDQVAAGIIKQAMKNGFKVPEDLAVIGFDNQLICQVVTPTITTIDIPVIELGQQAVLKIIESISGNASLNRRIIKLPTKLIIREST.

Residues 2-56 (PTIDEIAKLCNVSKTTVSRVLNNHPYVSKEKRDMILKAINELDYTPNYLARNFRR) form the HTH lacI-type domain. The segment at residues 4-23 (IDEIAKLCNVSKTTVSRVLN) is a DNA-binding region (H-T-H motif).

In terms of biological role, positively regulates the ntdABC operon and negatively regulates its own transcription. Binds to NTD to induce ntdABC transcription. The protein is NTD biosynthesis operon regulator NtdR (ntdR) of Bacillus subtilis (strain 168).